A 155-amino-acid chain; its full sequence is Riboflavin kinase (155 aa).

ATP-binding residues include G15, K21, T27, and N29. 2 residues coordinate Mg(2+): T27 and N29. E79 functions as the Nucleophile in the catalytic mechanism. I82, H84, and Y91 together coordinate ATP. FMN is bound by residues R104, K107, and F109.

As to quaternary structure, monomer. Directly interacts with TNFRSF1A death domain. TNFRSF1A-binding may be supported by TRADD. In the absence of TNFRSF1A, interacts with TRADD. Independently of TNFRSF1A, interacts with the NADPH oxidase subunit CYBA. It depends on Zn(2+) as a cofactor. Requires Mg(2+) as cofactor. In terms of tissue distribution, detected in brain, placenta and urinary bladder.

It is found in the cytoplasm. The catalysed reaction is riboflavin + ATP = FMN + ADP + H(+). The protein operates within cofactor biosynthesis; FMN biosynthesis; FMN from riboflavin (ATP route): step 1/1. In terms of biological role, catalyzes the phosphorylation of riboflavin (vitamin B2) to form flavin-mononucleotide (FMN), hence rate-limiting enzyme in the synthesis of FAD. Essential for TNF-induced reactive oxygen species (ROS) production. Through its interaction with both TNFRSF1A and CYBA, physically and functionally couples TNFRSF1A to NADPH oxidase. TNF-activation of RFK may enhance the incorporation of FAD in NADPH oxidase, a critical step for the assembly and activation of NADPH oxidase. The chain is Riboflavin kinase (RFK) from Homo sapiens (Human).